We begin with the raw amino-acid sequence, 167 residues long: 3-dehydroquinate dehydratase (167 aa).

Catalysis depends on Y22, which acts as the Proton acceptor. The substrate site is built by N76, H82, and D89. Residue H102 is the Proton donor of the active site. Residues 103–104 and R113 each bind substrate; that span reads LT.

This sequence belongs to the type-II 3-dehydroquinase family. In terms of assembly, homododecamer.

It carries out the reaction 3-dehydroquinate = 3-dehydroshikimate + H2O. The protein operates within metabolic intermediate biosynthesis; chorismate biosynthesis; chorismate from D-erythrose 4-phosphate and phosphoenolpyruvate: step 3/7. Catalyzes a trans-dehydration via an enolate intermediate. The sequence is that of 3-dehydroquinate dehydratase from Helicobacter pylori (strain Shi470).